The chain runs to 207 residues: Ribosomal RNA small subunit methyltransferase G (207 aa).

Residues glycine 73, leucine 78, 124 to 125 (VE), and arginine 139 contribute to the S-adenosyl-L-methionine site.

Belongs to the methyltransferase superfamily. RNA methyltransferase RsmG family.

It localises to the cytoplasm. It catalyses the reaction guanosine(527) in 16S rRNA + S-adenosyl-L-methionine = N(7)-methylguanosine(527) in 16S rRNA + S-adenosyl-L-homocysteine. In terms of biological role, specifically methylates the N7 position of guanine in position 527 of 16S rRNA. The sequence is that of Ribosomal RNA small subunit methyltransferase G from Escherichia coli (strain SMS-3-5 / SECEC).